The following is a 478-amino-acid chain: Ketoisovalerate oxidoreductase subunit VorA (478 aa).

In terms of assembly, heterotrimer of the VorA, VorB and VorC subunits.

The polypeptide is Ketoisovalerate oxidoreductase subunit VorA (vorA) (Methanothermobacter marburgensis (strain ATCC BAA-927 / DSM 2133 / JCM 14651 / NBRC 100331 / OCM 82 / Marburg) (Methanobacterium thermoautotrophicum)).